We begin with the raw amino-acid sequence, 224 residues long: Oocyte zinc finger protein XlCOF6.1 (224 aa).

8 C2H2-type zinc fingers span residues 6–28, 34–56, 62–84, 90–112, 118–140, 146–168, 174–196, and 202–224; these read FSCSVCGKCFALKTELTIHCRSH, FHCTECGKYFQHRSNLRRHQRYH, FTCFECGTCFVNYSWLMLHIRMH, FSCSECGKRFARRSVLEAHQKIH, FSCSECGKGFIKQCDLARHYRTH, FPCPECGKCFTQSMQLIRHRRTH, FACSECGKCFAQNSHLTQHRLGH, and FSCSECGKCFSRRSHLIAHLKSH.

It belongs to the krueppel C2H2-type zinc-finger protein family.

Its subcellular location is the nucleus. May be involved in transcriptional regulation. This Xenopus laevis (African clawed frog) protein is Oocyte zinc finger protein XlCOF6.1.